We begin with the raw amino-acid sequence, 180 residues long: Large ribosomal subunit protein uL5 (180 aa).

This sequence belongs to the universal ribosomal protein uL5 family. As to quaternary structure, part of the 50S ribosomal subunit; part of the 5S rRNA/L5/L18/L25 subcomplex. Contacts the 5S rRNA and the P site tRNA. Forms a bridge to the 30S subunit in the 70S ribosome.

Functionally, this is one of the proteins that bind and probably mediate the attachment of the 5S RNA into the large ribosomal subunit, where it forms part of the central protuberance. In the 70S ribosome it contacts protein S13 of the 30S subunit (bridge B1b), connecting the 2 subunits; this bridge is implicated in subunit movement. Contacts the P site tRNA; the 5S rRNA and some of its associated proteins might help stabilize positioning of ribosome-bound tRNAs. This chain is Large ribosomal subunit protein uL5, found in Streptococcus pyogenes serotype M49 (strain NZ131).